We begin with the raw amino-acid sequence, 306 residues long: Tyrosine recombinase XerC (306 aa).

Residues 1–85 (MQQQLEQFLA…AIKSFFEYLQ (85 aa)) form the Core-binding (CB) domain. In terms of domain architecture, Tyr recombinase spans 106–289 (FLPKAITVAQ…SNDRAVKYDQ (184 aa)). Residues Arg147, Lys171, His241, Arg244, and His267 contribute to the active site. Catalysis depends on Tyr276, which acts as the O-(3'-phospho-DNA)-tyrosine intermediate.

The protein belongs to the 'phage' integrase family. XerC subfamily. Forms a cyclic heterotetrameric complex composed of two molecules of XerC and two molecules of XerD.

The protein resides in the cytoplasm. Its function is as follows. Site-specific tyrosine recombinase, which acts by catalyzing the cutting and rejoining of the recombining DNA molecules. The XerC-XerD complex is essential to convert dimers of the bacterial chromosome into monomers to permit their segregation at cell division. It also contributes to the segregational stability of plasmids. The sequence is that of Tyrosine recombinase XerC from Herpetosiphon aurantiacus (strain ATCC 23779 / DSM 785 / 114-95).